The chain runs to 265 residues: uncharacterized protein (265 aa).

Residues 233–265 are disordered; sequence STACGSDQRPTRLPRASCSSRSISGSAARPWKR. Over residues 247-265 the composition is skewed to low complexity; that stretch reads RASCSSRSISGSAARPWKR.

This is an uncharacterized protein from Escherichia coli.